A 191-amino-acid chain; its full sequence is Peptidyl-tRNA hydrolase (191 aa).

Tyr-17 lines the tRNA pocket. The active-site Proton acceptor is the His-22. 3 residues coordinate tRNA: Tyr-68, Asn-70, and Asn-116.

The protein belongs to the PTH family. As to quaternary structure, monomer.

It localises to the cytoplasm. The catalysed reaction is an N-acyl-L-alpha-aminoacyl-tRNA + H2O = an N-acyl-L-amino acid + a tRNA + H(+). Functionally, hydrolyzes ribosome-free peptidyl-tRNAs (with 1 or more amino acids incorporated), which drop off the ribosome during protein synthesis, or as a result of ribosome stalling. In terms of biological role, catalyzes the release of premature peptidyl moieties from peptidyl-tRNA molecules trapped in stalled 50S ribosomal subunits, and thus maintains levels of free tRNAs and 50S ribosomes. In Francisella tularensis subsp. mediasiatica (strain FSC147), this protein is Peptidyl-tRNA hydrolase.